Here is a 133-residue protein sequence, read N- to C-terminus: Nucleoid-associated protein Mb3743c (133 aa).

A disordered region spans residues Gly98 to Ile133. Residues Pro102 to Pro113 are compositionally biased toward pro residues.

This sequence belongs to the YbaB/EbfC family. As to quaternary structure, homodimer.

It localises to the cytoplasm. It is found in the nucleoid. Its function is as follows. Binds to DNA and alters its conformation. May be involved in regulation of gene expression, nucleoid organization and DNA protection. The polypeptide is Nucleoid-associated protein Mb3743c (Mycobacterium bovis (strain ATCC BAA-935 / AF2122/97)).